The sequence spans 498 residues: Glycerol kinase (498 aa).

Position 12 (T12) interacts with ADP. Residues T12, T13, and S14 each coordinate ATP. T12 lines the sn-glycerol 3-phosphate pocket. Residue R16 participates in ADP binding. Sn-glycerol 3-phosphate contacts are provided by R82, E83, Y134, and D244. Glycerol contacts are provided by R82, E83, Y134, D244, and Q245. ADP-binding residues include T266 and G310. Residues T266, G310, Q314, and G411 each coordinate ATP. The ADP site is built by G411 and N415.

Belongs to the FGGY kinase family.

The catalysed reaction is glycerol + ATP = sn-glycerol 3-phosphate + ADP + H(+). Its pathway is polyol metabolism; glycerol degradation via glycerol kinase pathway; sn-glycerol 3-phosphate from glycerol: step 1/1. With respect to regulation, inhibited by fructose 1,6-bisphosphate (FBP). Key enzyme in the regulation of glycerol uptake and metabolism. Catalyzes the phosphorylation of glycerol to yield sn-glycerol 3-phosphate. The sequence is that of Glycerol kinase from Chloroflexus aurantiacus (strain ATCC 29364 / DSM 637 / Y-400-fl).